The following is a 514-amino-acid chain: Alanine--glyoxylate aminotransferase 2, mitochondrial (514 aa).

The transit peptide at 1–41 (MTLIWRHLLRPLCLVTSAPRILEMHPFLSLGTSRTSVTKLS) directs the protein to the mitochondrion. Lysine 71 is subject to N6-acetyllysine; alternate. Residue lysine 71 is modified to N6-succinyllysine; alternate. Lysine 84 carries the post-translational modification N6-acetyllysine. Lysine 262 carries the post-translational modification N6-acetyllysine; alternate. Lysine 262 carries the N6-succinyllysine; alternate modification. The residue at position 304 (lysine 304) is an N6-succinyllysine. Lysine 350 carries the post-translational modification N6-(pyridoxal phosphate)lysine. An N6-acetyllysine; alternate mark is found at lysine 417 and lysine 420. N6-succinyllysine; alternate occurs at positions 417 and 420.

The protein belongs to the class-III pyridoxal-phosphate-dependent aminotransferase family. Homotetramer. Pyridoxal 5'-phosphate is required as a cofactor. In terms of tissue distribution, expressed in the convoluted tubule in the kidney and in the liver hepatocytes (at protein level).

It is found in the mitochondrion. The enzyme catalyses glyoxylate + L-alanine = glycine + pyruvate. The catalysed reaction is (R)-3-amino-2-methylpropanoate + pyruvate = 2-methyl-3-oxopropanoate + L-alanine. It carries out the reaction 3-oxopropanoate + L-alanine = beta-alanine + pyruvate. It catalyses the reaction 2-oxobutanoate + L-alanine = (2S)-2-aminobutanoate + pyruvate. The enzyme catalyses N(omega),N(omega)-dimethyl-L-arginine + pyruvate = 5-(3,3-dimethylguanidino)-2-oxopentanoate + L-alanine. The catalysed reaction is N(omega),N('omega)-dimethyl-L-arginine + pyruvate = 5-(3,3'-dimethylguanidino)-2-oxopentanoate + L-alanine. It carries out the reaction N(omega),N(omega)-dimethyl-L-arginine + glyoxylate = 5-(3,3-dimethylguanidino)-2-oxopentanoate + glycine. It catalyses the reaction N(omega),N('omega)-dimethyl-L-arginine + glyoxylate = 5-(3,3'-dimethylguanidino)-2-oxopentanoate + glycine. The enzyme catalyses N(omega)-methyl-L-arginine + pyruvate = 5-(3-methylguanidino)-2-oxopentanoate + L-alanine. The catalysed reaction is N(omega)-methyl-L-arginine + glyoxylate = 5-(3-methylguanidino)-2-oxopentanoate + glycine. It carries out the reaction L-ornithine + pyruvate = 5-amino-2-oxopentanoate + L-alanine. It catalyses the reaction L-ornithine + glyoxylate = 5-amino-2-oxopentanoate + glycine. The enzyme catalyses (2S)-2-aminobutanoate + glyoxylate = 2-oxobutanoate + glycine. The catalysed reaction is N(omega),N(omega)-dimethyl-L-arginine + oxaloacetate = 5-(3,3-dimethylguanidino)-2-oxopentanoate + L-aspartate. It carries out the reaction oxaloacetate + L-alanine = L-aspartate + pyruvate. It catalyses the reaction N(omega),N(omega)-dimethyl-L-arginine + 2-oxobutanoate = 5-(3,3-dimethylguanidino)-2-oxopentanoate + (2S)-2-aminobutanoate. The enzyme catalyses 2-oxopentanoate + N(omega),N(omega)-dimethyl-L-arginine = 5-(3,3-dimethylguanidino)-2-oxopentanoate + L-2-aminopentanoate. The catalysed reaction is 2-oxohexanoate + N(omega),N(omega)-dimethyl-L-arginine = L-2-aminohexanoate + 5-(3,3-dimethylguanidino)-2-oxopentanoate. Its function is as follows. Multifunctional aminotransferase with a broad substrate specificity. Catalyzes the conversion of glyoxylate to glycine using alanine as the amino donor. Catalyzes metabolism of not L- but the D-isomer of D-beta-aminoisobutyric acid to generate 2-methyl-3-oxopropanoate and alanine. Catalyzes the transfer of the amino group from beta-alanine to pyruvate to yield L-alanine and 3-oxopropanoate. Can metabolize NG-monomethyl-L-arginine (NMMA), asymmetric NG,NG-dimethyl-L-arginine (ADMA) and symmetric NG,N'G-dimethyl-L-arginine (SDMA). ADMA is a potent inhibitor of nitric-oxide (NO) synthase, and this activity provides mechanism through which the kidney regulates blood pressure. The protein is Alanine--glyoxylate aminotransferase 2, mitochondrial (AGXT2) of Homo sapiens (Human).